The chain runs to 960 residues: UPF0182 protein DSY1630 (960 aa).

7 helical membrane-spanning segments follow: residues Ile7–Glu27, Ile50–Ile70, Thr105–Phe125, Phe169–Ile189, Leu212–Phe232, Ala256–Phe276, and Leu285–Leu305. Disordered stretches follow at residues Ser866–Thr899 and Thr924–Pro960. Residues Glu881–Glu897 show a composition bias toward acidic residues. A compositionally biased stretch (basic and acidic residues) spans Glu931 to Gln944. A compositionally biased stretch (polar residues) spans Ser950–Pro960.

Belongs to the UPF0182 family.

It is found in the cell membrane. The protein is UPF0182 protein DSY1630 of Desulfitobacterium hafniense (strain Y51).